The chain runs to 182 residues: Isopentenyl-diphosphate Delta-isomerase (182 aa).

Mn(2+)-binding residues include His-23 and His-30. One can recognise a Nudix hydrolase domain in the interval 28–162 (PRHLAFSCHV…PWAFSPWLVE (135 aa)). Cys-65 is an active-site residue. Cys-65 provides a ligand contact to Mg(2+). Position 67 (His-67) interacts with Mn(2+). Glu-85 provides a ligand contact to Mg(2+). Mn(2+) is bound by residues Glu-112 and Glu-114. The active site involves Glu-114.

It belongs to the IPP isomerase type 1 family. Mg(2+) serves as cofactor. Requires Mn(2+) as cofactor.

It localises to the cytoplasm. It catalyses the reaction isopentenyl diphosphate = dimethylallyl diphosphate. It participates in isoprenoid biosynthesis; dimethylallyl diphosphate biosynthesis; dimethylallyl diphosphate from isopentenyl diphosphate: step 1/1. Functionally, catalyzes the 1,3-allylic rearrangement of the homoallylic substrate isopentenyl (IPP) to its highly electrophilic allylic isomer, dimethylallyl diphosphate (DMAPP). The chain is Isopentenyl-diphosphate Delta-isomerase from Brevibacterium linens.